A 216-amino-acid polypeptide reads, in one-letter code: Somatotropin (216 aa).

An N-terminal signal peptide occupies residues methionine 1–alanine 26. Residue histidine 45 coordinates Zn(2+). A disulfide bridge links cysteine 78 with cysteine 189. Serine 131 carries the post-translational modification Phosphoserine. Glutamate 198 provides a ligand contact to Zn(2+). Residues cysteine 206 and cysteine 214 are joined by a disulfide bond.

The protein belongs to the somatotropin/prolactin family.

The protein localises to the secreted. Functionally, plays an important role in growth control. Its major role in stimulating body growth is to stimulate the liver and other tissues to secrete IGF1. It stimulates both the differentiation and proliferation of myoblasts. It also stimulates amino acid uptake and protein synthesis in muscle and other tissues. The polypeptide is Somatotropin (GH1) (Neovison vison (American mink)).